Here is a 325-residue protein sequence, read N- to C-terminus: Cytochrome c biogenesis protein CcsA (325 aa).

Helical transmembrane passes span 12–32 (HISF…LLFV), 45–65 (GMII…VFSG), 72–92 (LYES…VPYF), 100–120 (LNTI…SGLL), 145–165 (MILG…ILVI), 231–251 (TISL…VWAN), 264–281 (ETWA…LHTR), and 293–313 (IVAS…NLLG).

It belongs to the CcmF/CycK/Ccl1/NrfE/CcsA family. As to quaternary structure, may interact with Ccs1.

It localises to the plastid. It is found in the chloroplast thylakoid membrane. Functionally, required during biogenesis of c-type cytochromes (cytochrome c6 and cytochrome f) at the step of heme attachment. The protein is Cytochrome c biogenesis protein CcsA of Glycine max (Soybean).